Consider the following 221-residue polypeptide: Ribosomal RNA large subunit methyltransferase E (221 aa).

Residues Gly-60, Trp-62, Asp-89, Asp-105, and Asp-134 each contribute to the S-adenosyl-L-methionine site. Catalysis depends on Lys-174, which acts as the Proton acceptor. The interval Lys-199–Gly-221 is disordered.

Belongs to the class I-like SAM-binding methyltransferase superfamily. RNA methyltransferase RlmE family.

The protein resides in the cytoplasm. The enzyme catalyses uridine(2552) in 23S rRNA + S-adenosyl-L-methionine = 2'-O-methyluridine(2552) in 23S rRNA + S-adenosyl-L-homocysteine + H(+). In terms of biological role, specifically methylates the uridine in position 2552 of 23S rRNA at the 2'-O position of the ribose in the fully assembled 50S ribosomal subunit. This chain is Ribosomal RNA large subunit methyltransferase E, found in Ralstonia nicotianae (strain ATCC BAA-1114 / GMI1000) (Ralstonia solanacearum).